The following is a 215-amino-acid chain: 3-isopropylmalate dehydratase small subunit (215 aa).

It belongs to the LeuD family. LeuD type 1 subfamily. As to quaternary structure, heterodimer of LeuC and LeuD.

It catalyses the reaction (2R,3S)-3-isopropylmalate = (2S)-2-isopropylmalate. It functions in the pathway amino-acid biosynthesis; L-leucine biosynthesis; L-leucine from 3-methyl-2-oxobutanoate: step 2/4. Its function is as follows. Catalyzes the isomerization between 2-isopropylmalate and 3-isopropylmalate, via the formation of 2-isopropylmaleate. This is 3-isopropylmalate dehydratase small subunit from Ectopseudomonas mendocina (strain ymp) (Pseudomonas mendocina).